We begin with the raw amino-acid sequence, 483 residues long: Membrane-bound lytic murein transglycosylase F (483 aa).

Positions 1 to 18 are cleaved as a signal peptide; that stretch reads MKGLIARFIAGFALLLWA. Positions 19 to 267 are non-LT domain; sequence WDMVFPWQQL…RIEEKYFNHL (249 aa). Residues 269-483 form an LT domain region; sequence HFDYVDIQSY…SKESDSTLKE (215 aa). Glutamate 312 is a catalytic residue. Positions 459 to 483 are disordered; it reads QIQNNEEQSSVPQEISKESDSTLKE. Residues 473 to 483 are compositionally biased toward basic and acidic residues; it reads ISKESDSTLKE.

It in the N-terminal section; belongs to the bacterial solute-binding protein 3 family. This sequence in the C-terminal section; belongs to the transglycosylase Slt family.

The protein resides in the cell outer membrane. It catalyses the reaction Exolytic cleavage of the (1-&gt;4)-beta-glycosidic linkage between N-acetylmuramic acid (MurNAc) and N-acetylglucosamine (GlcNAc) residues in peptidoglycan, from either the reducing or the non-reducing ends of the peptidoglycan chains, with concomitant formation of a 1,6-anhydrobond in the MurNAc residue.. Functionally, murein-degrading enzyme that degrades murein glycan strands and insoluble, high-molecular weight murein sacculi, with the concomitant formation of a 1,6-anhydromuramoyl product. Lytic transglycosylases (LTs) play an integral role in the metabolism of the peptidoglycan (PG) sacculus. Their lytic action creates space within the PG sacculus to allow for its expansion as well as for the insertion of various structures such as secretion systems and flagella. This chain is Membrane-bound lytic murein transglycosylase F, found in Actinobacillus pleuropneumoniae serotype 7 (strain AP76).